The following is a 520-amino-acid chain: ATP-dependent clpX-like chaperone, mitochondrial (520 aa).

A mitochondrion-targeting transit peptide spans 1–13 (MLKSASQNFFRAY). Residue 140–147 (GPSGSGKT) participates in ATP binding.

Belongs to the ClpX chaperone family. Homohexamer that forms a ring structure; this hexamerization requires ATP binding. Interacts with HEM1.

It localises to the mitochondrion inner membrane. Its function is as follows. ATP-dependent unfoldase that stimulates the incorporation of the pyridoxal phosphate cofactor into 5-aminolevulinate synthase (HEM1), thereby activating 5-aminolevulinate (ALA) synthesis, the first step in heme biosynthesis. Up-regulates heme biosynthesis. This chain is ATP-dependent clpX-like chaperone, mitochondrial, found in Saccharomyces cerevisiae (strain ATCC 204508 / S288c) (Baker's yeast).